A 392-amino-acid chain; its full sequence is Probable protein phosphatase 2C 29 (392 aa).

The region spanning 44–353 (DYSVAVAQAN…DDITVVVLFL (310 aa)) is the PPM-type phosphatase domain. The Mn(2+) site is built by aspartate 75, glycine 76, aspartate 285, and aspartate 344. A disordered region spans residues 360–392 (AGRGDEIDGTDGPVDVFSLSPDDREDPTRPVLR).

Belongs to the PP2C family. Mg(2+) serves as cofactor. Requires Mn(2+) as cofactor.

It carries out the reaction O-phospho-L-seryl-[protein] + H2O = L-seryl-[protein] + phosphate. The catalysed reaction is O-phospho-L-threonyl-[protein] + H2O = L-threonyl-[protein] + phosphate. The sequence is that of Probable protein phosphatase 2C 29 from Oryza sativa subsp. japonica (Rice).